The following is a 220-amino-acid chain: Adapter protein MecA (220 aa).

It belongs to the MecA family. In terms of assembly, homodimer.

Functionally, enables the recognition and targeting of unfolded and aggregated proteins to the ClpC protease or to other proteins involved in proteolysis. This is Adapter protein MecA from Enterococcus faecalis (strain ATCC 700802 / V583).